The following is a 142-amino-acid chain: MAEQKKKVSPRRRARECAVQALYSWAVSNNDATEIELSFITEQDMKGVDTPYFRKLFRNTVTYLESVDVTIAPFLDRTSEELTPIEKAVLRLATYELKYEPDVPYKVAINEAIELAKTFGAEDSHKYINGVLDKIAPALGRK.

The protein belongs to the NusB family.

In terms of biological role, involved in transcription antitermination. Required for transcription of ribosomal RNA (rRNA) genes. Binds specifically to the boxA antiterminator sequence of the ribosomal RNA (rrn) operons. In Actinobacillus succinogenes (strain ATCC 55618 / DSM 22257 / CCUG 43843 / 130Z), this protein is Transcription antitermination protein NusB.